Here is a 160-residue protein sequence, read N- to C-terminus: MTTHVILVARAFGAKGVYIEGKDEKMVKSILKVIDSWGGSSYFLVKEIENGKSIVNEWKEKGGTIIHLTMYGININDFQDRFEKIKYPLLIIVGAEKVEGWYYHNADYNIAIGNQPHSEVAALAIFLDRIYKGRELYMEFEDAKIKILPQKAGKKVIRSG.

S-adenosyl-L-methionine contacts are provided by residues leucine 68, 94–98, and 112–119; these read GAEKV and IGNQPHSE.

It belongs to the aTrm56 family. Homodimer.

It is found in the cytoplasm. It carries out the reaction cytidine(56) in tRNA + S-adenosyl-L-methionine = 2'-O-methylcytidine(56) in tRNA + S-adenosyl-L-homocysteine + H(+). Its function is as follows. Specifically catalyzes the AdoMet-dependent 2'-O-ribose methylation of cytidine at position 56 in tRNAs. In Saccharolobus solfataricus (strain ATCC 35092 / DSM 1617 / JCM 11322 / P2) (Sulfolobus solfataricus), this protein is tRNA (cytidine(56)-2'-O)-methyltransferase.